Here is a 494-residue protein sequence, read N- to C-terminus: Catalase (494 aa).

Active-site residues include His65 and Asn138. Residue Tyr348 coordinates heme.

Belongs to the catalase family. In terms of assembly, homotetramer. It depends on heme as a cofactor.

Its subcellular location is the cytoplasm. The protein localises to the cytosol. The protein resides in the peroxisome matrix. The catalysed reaction is 2 H2O2 = O2 + 2 H2O. Its function is as follows. Catalyzes the degradation of hydrogen peroxide (H(2)O(2)) generated by peroxisomal oxidases to water and oxygen, thereby protecting cells from the toxic effects of hydrogen peroxide. This is Catalase from Pisum sativum (Garden pea).